We begin with the raw amino-acid sequence, 82 residues long: Delta-actitoxin-Aeq2a (82 aa).

An N-terminal signal peptide occupies residues Met1–Ala19. The propeptide occupies Asp20 to Ala26. 3 disulfide bridges follow: Cys32-Cys79, Cys34-Cys69, and Cys62-Cys80.

It belongs to the sea anemone sodium channel inhibitory toxin family. Type I subfamily.

The protein localises to the secreted. Its subcellular location is the nematocyst. Its function is as follows. Binds specifically to voltage-gated sodium channels (Nav), thereby delaying their inactivation during signal transduction. Causes death to crabs (minimum lethal dose of 25 ug/kg) and mice. This chain is Delta-actitoxin-Aeq2a, found in Actinia equina (Beadlet anemone).